The chain runs to 370 residues: MSLVQKIKEVEDEMARTQKNKATSFHLGVLKAKLAKYKRELLLGPSKGAAAGAGEGFDVSKAGDARVGLIGFPSVGKSTLLTKLTGTSSEVASYEFTTLTCIPGVINYKGAKIQLLDLPGIIEGAKDGKGRGRQVIAVGRTCNLILIVLDAMKPLVHKKIIERELDGFGIRLNKQPPPITFKKKEKGGINFSHTPNVNPTQLDSETVKAICAEYKIHNADVILRGNCTVDEFIDVIEGNRIYVPCIYVLNKIDAISIEELDLLDKIPHYVPISSHLEWNLDALLDKIWEYLKLIRVYTKPKGLIPDYNEPVVIRGGEEASIETFCNHIHNSIIRQFRYALVWGSSAKHNPQRCGKDHVLADEDIVQIVKK.

Positions 65–292 (ARVGLIGFPS…LLDKIWEYLK (228 aa)) constitute an OBG-type G domain. Residues 71-78 (GFPSVGKS), 117-121 (DLPGI), and 250-253 (NKID) contribute to the GTP site. The region spanning 292–369 (KLIRVYTKPK…ADEDIVQIVK (78 aa)) is the TGS domain.

It belongs to the TRAFAC class OBG-HflX-like GTPase superfamily. OBG GTPase family.

This Dictyostelium discoideum (Social amoeba) protein is Developmentally-regulated GTP-binding protein 1 homolog (drg1).